The chain runs to 540 residues: Light-independent protochlorophyllide reductase subunit B (540 aa).

A [4Fe-4S] cluster-binding site is contributed by aspartate 36. The active-site Proton donor is aspartate 287. Residue 422–423 coordinates substrate; the sequence is GL.

It belongs to the ChlB/BchB/BchZ family. As to quaternary structure, protochlorophyllide reductase is composed of three subunits; BchL, BchN and BchB. Forms a heterotetramer of two BchB and two BchN subunits. Requires [4Fe-4S] cluster as cofactor.

It catalyses the reaction chlorophyllide a + oxidized 2[4Fe-4S]-[ferredoxin] + 2 ADP + 2 phosphate = protochlorophyllide a + reduced 2[4Fe-4S]-[ferredoxin] + 2 ATP + 2 H2O. Its pathway is porphyrin-containing compound metabolism; bacteriochlorophyll biosynthesis (light-independent). Component of the dark-operative protochlorophyllide reductase (DPOR) that uses Mg-ATP and reduced ferredoxin to reduce ring D of protochlorophyllide (Pchlide) to form chlorophyllide a (Chlide). This reaction is light-independent. The NB-protein (BchN-BchB) is the catalytic component of the complex. The protein is Light-independent protochlorophyllide reductase subunit B of Rhodopseudomonas palustris (strain TIE-1).